Consider the following 115-residue polypeptide: Large ribosomal subunit protein bL19 (115 aa).

Belongs to the bacterial ribosomal protein bL19 family.

Its function is as follows. This protein is located at the 30S-50S ribosomal subunit interface and may play a role in the structure and function of the aminoacyl-tRNA binding site. This Fervidobacterium nodosum (strain ATCC 35602 / DSM 5306 / Rt17-B1) protein is Large ribosomal subunit protein bL19.